A 1055-amino-acid polypeptide reads, in one-letter code: Cellulose synthase A catalytic subunit 9 [UDP-forming] (1055 aa).

Topologically, residues 1–268 (MEASAGLVAG…ASSKVNPYRM (268 aa)) are cytoplasmic. Residues C37, C40, C56, C59, C64, C67, C79, and C82 each contribute to the Zn(2+) site. The RING-type; degenerate zinc finger occupies 37–83 (CEICGDEVGRTVDGDLFVACNECGFPVCRPCYEYERREGTQNCPQCK). Residues 269 to 289 (VIILRLVVLGFFLRYRILHPV) traverse the membrane as a helical segment. Residues 290–291 (PD) are Extracellular-facing. The chain crosses the membrane as a helical span at residues 292–312 (AIPLWLTSIICEIWFAVSWIL). Over 313 to 831 (DQFPKWYPID…LERFSYINTT (519 aa)) the chain is Cytoplasmic. S351, K357, E358, and D387 together coordinate UDP-alpha-D-glucose. D387 is a catalytic residue. Positions 439–468 (NFVQERRAMKREYEEFKVRINALVAKAQKV) form a coiled coil. Residue K528 coordinates UDP-alpha-D-glucose. Mn(2+)-binding residues include K529 and D553. Residue D753 is part of the active site. Residues 832-852 (IYPFTSLPLLAYCTLPAVCLL) form a helical membrane-spanning segment. Over 853–860 (TGKFIMPP) the chain is Extracellular. Residues 861–881 (ISTFASLFFIALFISIFATGI) traverse the membrane as a helical segment. Residues 882–899 (LEMRWSGVSIEEWWRNEQ) are Cytoplasmic-facing. A helical membrane pass occupies residues 900-920 (FWVIGGVSAHLFAVVQGLLKV). Topologically, residues 921–951 (LAGIDTNFTVTSKATGDEDDEFAELYAFKWT) are extracellular. Residue N927 is glycosylated (N-linked (GlcNAc...) asparagine). The helical transmembrane segment at 952 to 972 (TLLIPPTTLLILNIIGVVAGV) threads the bilayer. Residues 973 to 983 (SDAINNGSEAW) lie on the Cytoplasmic side of the membrane. Residues 984 to 1004 (GPLFGKLFFAFWVIVHLYPFL) form a helical membrane-spanning segment. Residues 1005–1013 (KGLMGRQNR) lie on the Extracellular side of the membrane. Residues 1014–1034 (TPTIVVIWSVLLASIFSLLWV) traverse the membrane as a helical segment. Residues 1035–1055 (RIDPFTIKARGPDVRQCGINC) lie on the Cytoplasmic side of the membrane.

This sequence belongs to the glycosyltransferase 2 family. Plant cellulose synthase subfamily. Requires Mn(2+) as cofactor. Zn(2+) is required as a cofactor.

The protein resides in the cell membrane. The catalysed reaction is [(1-&gt;4)-beta-D-glucosyl](n) + UDP-alpha-D-glucose = [(1-&gt;4)-beta-D-glucosyl](n+1) + UDP + H(+). It functions in the pathway glycan metabolism; plant cellulose biosynthesis. Catalytic subunit of cellulose synthase terminal complexes ('rosettes'), required for beta-1,4-glucan microfibril crystallization, a major mechanism of the cell wall formation. Involved in the secondary cell wall formation. This is Cellulose synthase A catalytic subunit 9 [UDP-forming] (CESA9) from Oryza sativa subsp. indica (Rice).